The primary structure comprises 442 residues: tRNA-2-methylthio-N(6)-dimethylallyladenosine synthase (442 aa).

The region spanning 2 to 120 (KKVFIRTFGC…LPKMIVDKET (119 aa)) is the MTTase N-terminal domain. [4Fe-4S] cluster-binding residues include cysteine 11, cysteine 49, cysteine 83, cysteine 157, cysteine 161, and cysteine 164. The region spanning 143-375 (RVEGGAAFVS…NEVIEAETAR (233 aa)) is the Radical SAM core domain. One can recognise a TRAM domain in the interval 378–441 (QTMIGTVQRC…TFSLRGKIVE (64 aa)).

It belongs to the methylthiotransferase family. MiaB subfamily. As to quaternary structure, monomer. [4Fe-4S] cluster is required as a cofactor.

The protein localises to the cytoplasm. The enzyme catalyses N(6)-dimethylallyladenosine(37) in tRNA + (sulfur carrier)-SH + AH2 + 2 S-adenosyl-L-methionine = 2-methylsulfanyl-N(6)-dimethylallyladenosine(37) in tRNA + (sulfur carrier)-H + 5'-deoxyadenosine + L-methionine + A + S-adenosyl-L-homocysteine + 2 H(+). Its function is as follows. Catalyzes the methylthiolation of N6-(dimethylallyl)adenosine (i(6)A), leading to the formation of 2-methylthio-N6-(dimethylallyl)adenosine (ms(2)i(6)A) at position 37 in tRNAs that read codons beginning with uridine. The protein is tRNA-2-methylthio-N(6)-dimethylallyladenosine synthase of Neisseria meningitidis serogroup A / serotype 4A (strain DSM 15465 / Z2491).